Here is a 177-residue protein sequence, read N- to C-terminus: Large ribosomal subunit protein eL20 (177 aa).

Belongs to the eukaryotic ribosomal protein eL20 family.

This is Large ribosomal subunit protein eL20 (RpL18A) from Spodoptera frugiperda (Fall armyworm).